The following is a 143-amino-acid chain: Large ribosomal subunit protein uL16 (143 aa).

The interval 1–26 (MSMALLPRRVKYRKSQRGSRKGNATR) is disordered. A compositionally biased stretch (basic residues) spans 8-20 (RRVKYRKSQRGSR).

Belongs to the universal ribosomal protein uL16 family. Part of the 50S ribosomal subunit.

Binds 23S rRNA and is also seen to make contacts with the A and possibly P site tRNAs. The chain is Large ribosomal subunit protein uL16 from Methylacidiphilum infernorum (isolate V4) (Methylokorus infernorum (strain V4)).